An 867-amino-acid polypeptide reads, in one-letter code: cGMP-dependent 3',5'-cGMP phosphodiesterase A (867 aa).

The segment covering 121–146 (IINSSSSTTDTSKTSPIKKQTSSSSP) has biased composition (low complexity). Disordered stretches follow at residues 121 to 167 (IINS…SQQQ) and 180 to 241 (HHHH…STFP). A compositionally biased stretch (pro residues) spans 147–160 (PLSPQQQQPPPPLV). Over residues 191-220 (NDNNNNTTTNNNNIEILEQQQQQQQQQQQQ) the composition is skewed to low complexity. Positions 221–232 (QDEDSTDVDEEF) are enriched in acidic residues. Positions 357 to 503 (STTGFVLWIN…GDTCYDPNRI (147 aa)) are phosphodiesterase activity. A divalent metal cation is bound by residues His399, His401, and Asp403. A nucleoside 3',5'-cyclic phosphate contacts are provided by residues 607–721 (IFRS…WEMR) and 734–851 (VFSR…IFVD).

Belongs to the metallo-beta-lactamase superfamily. cNMP phosphodiesterase family. Requires Mn(2+) as cofactor. The cofactor is Mg(2+). It depends on Zn(2+) as a cofactor.

The protein localises to the cytoplasm. It is found in the cytosol. The catalysed reaction is 3',5'-cyclic GMP + H2O = GMP + H(+). Phosphodiesterase specific for cGMP, which is activated by cGMP but not by cAMP. Involved in the degradation of intracellular cGMP, contributes to the control of cGMP signals. The sequence is that of cGMP-dependent 3',5'-cGMP phosphodiesterase A (pdeD) from Dictyostelium discoideum (Social amoeba).